We begin with the raw amino-acid sequence, 448 residues long: Phosphoglucosamine mutase (448 aa).

The active-site Phosphoserine intermediate is the S108. S108, D247, D249, and D251 together coordinate Mg(2+). Residue S108 is modified to Phosphoserine.

The protein belongs to the phosphohexose mutase family. It depends on Mg(2+) as a cofactor. In terms of processing, activated by phosphorylation.

It catalyses the reaction alpha-D-glucosamine 1-phosphate = D-glucosamine 6-phosphate. In terms of biological role, catalyzes the conversion of glucosamine-6-phosphate to glucosamine-1-phosphate. The chain is Phosphoglucosamine mutase from Herminiimonas arsenicoxydans.